The chain runs to 227 residues: Thymidylate kinase (227 aa).

16–23 (GIDGAGKT) provides a ligand contact to ATP.

Belongs to the thymidylate kinase family.

It catalyses the reaction dTMP + ATP = dTDP + ADP. Functionally, phosphorylation of dTMP to form dTDP in both de novo and salvage pathways of dTTP synthesis. This is Thymidylate kinase from Xanthomonas oryzae pv. oryzae (strain MAFF 311018).